Reading from the N-terminus, the 818-residue chain is H(+)/Cl(-) exchange transporter 3 (818 aa).

The Cytoplasmic portion of the chain corresponds to 1 to 125 (MESEQLFHRG…WEMTKSLYDA (125 aa)). 3 short sequence motifs (di-leucine internalization motif; mediates targeting to late endosome and lysosome membranes) span residues 28–29 (LL), 46–47 (LL), and 71–75 (LLDLL). A helical membrane pass occupies residues 126 to 163 (WSGWLVVTLTGLASGALAGLIDIAADWMTDLKEGICLS). An N-linked (GlcNAc...) asparagine glycan is attached at Asn-177. A helical membrane pass occupies residues 209 to 232 (MNYIMYIFWALSFAFLAVSLVKVF). The Selectivity filter part_1 motif lies at 238 to 242 (GSGIP). Ser-239 is a chloride binding site. An intramembrane region (helical) is located at residues 241–248 (IPEIKTIL). 2 consecutive transmembrane segments (helical) span residues 258 to 276 (GKWTLMIKTITLVLAVASG) and 282 to 301 (EGPLVHVACCCGNIFSYLFP). Positions 280–284 (GKEGP) match the Selectivity filter part_2 motif. 2 intramembrane regions (helical) span residues 313-325 (VLSAASAAGVSVA) and 329-337 (PIGGVLFSL). 3 consecutive transmembrane segments (helical) span residues 349 to 367 (LWRSFFAALVAAFVLRSIN), 391 to 416 (FPFILLGVFGGLWGAFFIRANIAWCR), and 423 to 443 (FGKYPVLEVIIVAAITAVIAF). Residues Asn-451 and Asn-479 are each glycosylated (N-linked (GlcNAc...) asparagine). The next 2 membrane-spanning stretches (helical) occupy residues 500-520 (IWQLCLALIFKIIMTVFTFGI) and 525-544 (GLFIPSMAIGAIAGRIVGIA). A Selectivity filter part_3 motif is present at residues 525 to 529 (GLFIP). Phe-527 provides a ligand contact to chloride. 2 consecutive intramembrane regions (helical) follow at residues 572–586 (GLYAMVGAAACLGGV) and 590–601 (TVSLVVIVFELT). The segment at residues 602-605 (GGLE) is an intramembrane region (note=Loop between two helices). The helical transmembrane segment at 606-624 (YIVPLMAAVMTSKWVGDAF) threads the bilayer. Over 625–818 (GREGIYEAHI…NQDPASIMFN (194 aa)) the chain is Cytoplasmic. Tyr-630 contacts chloride. 2 consecutive CBS domains span residues 658–722 (MRPR…ARKK) and 755–812 (LDMS…NQDP). Residues 689-691 (YNG) and 796-799 (TKKD) each bind ATP.

It belongs to the chloride channel (TC 2.A.49) family. ClC-3/CLCN3 subfamily. In terms of assembly, monomer and homodimer. Forms heterodimers with CLCN4. In terms of processing, N-glycosylated. As to expression, abundant in brain, especially in the olfactory bulb, hippocampus, and cerebellum. A moderate expression is seen in the lung, kidney and adrenal gland.

Its subcellular location is the lysosome membrane. The protein resides in the late endosome membrane. The protein localises to the cell membrane. It localises to the early endosome membrane. Functionally, strongly outwardly rectifying, electrogenic H(+)/Cl(-)exchanger which mediates the exchange of chloride ions against protons. The CLC channel family contains both chloride channels and proton-coupled anion transporters that exchange chloride or another anion for protons. The presence of conserved gating glutamate residues is typical for family members that function as antiporters. In terms of biological role, strongly outwardly rectifying, electrogenic H(+)/Cl(-)exchanger which mediates the exchange of chloride ions against protons. May play an important role in neuronal cell function through regulation of membrane excitability by protein kinase C. It could help neuronal cells to establish short-term memory. The protein is H(+)/Cl(-) exchange transporter 3 (Clcn3) of Rattus norvegicus (Rat).